Consider the following 322-residue polypeptide: Sideroflexin-1 (322 aa).

S2 carries the N-acetylserine modification. At 2–102 (SGELPPNINI…MSAQVPMNMT (101 aa)) the chain is on the mitochondrial matrix side. A helical membrane pass occupies residues 103–120 (ITGCMMTFYRTTPAVLFW). The Mitochondrial intermembrane portion of the chain corresponds to 121 to 146 (QWINQSFNAVVNYTNRSGDAPLTVNE). The chain crosses the membrane as a helical span at residues 147-167 (LGTAYVSATTGAVATALGLNA). The Mitochondrial matrix segment spans residues 168–174 (LTKHVSP). Residues 175-195 (LIGRFVPFAAVAAANCINIPL) traverse the membrane as a helical segment. Residues 196–228 (MRQRELRAGIPVTDENGNRLGESANAAKQAITQ) lie on the Mitochondrial intermembrane side of the membrane. The chain crosses the membrane as a helical span at residues 229-249 (VVISRILMAAPGMAIPPFIMN). Residues 250 to 266 (TLEKKAFLKRFPWMSAP) lie on the Mitochondrial matrix side of the membrane. A helical transmembrane segment spans residues 267–287 (IQVGLVGFCLVFATPLCCALF). Over 288–322 (PQKSSMSVTSLEAELQAKIRETSPELRRVYFNKGL) the chain is Mitochondrial intermembrane.

This sequence belongs to the sideroflexin family.

Its subcellular location is the mitochondrion inner membrane. The catalysed reaction is L-serine(in) = L-serine(out). The enzyme catalyses L-alanine(in) = L-alanine(out). It carries out the reaction L-cysteine(in) = L-cysteine(out). Its function is as follows. Amino acid transporter importing serine, an essential substrate of the mitochondrial branch of the one-carbon pathway, into mitochondria. Mitochondrial serine is then converted to glycine and formate, which exits to the cytosol where it is used to generate the charged folates that serve as one-carbon donors. May also transport other amino acids including alanine and cysteine. The sequence is that of Sideroflexin-1 (SFXN1) from Sus scrofa (Pig).